The sequence spans 224 residues: uncharacterized protein (224 aa).

N-linked (GlcNAc...) asparagine glycosylation is found at N10, N70, and N74.

Its subcellular location is the endoplasmic reticulum. This is an uncharacterized protein from Saccharomyces cerevisiae (strain ATCC 204508 / S288c) (Baker's yeast).